A 400-amino-acid chain; its full sequence is Peptidase M20 domain-containing protein C757.05c (400 aa).

Positions Met-1 to Ala-25 are cleaved as a signal peptide. The N-linked (GlcNAc...) asparagine glycan is linked to Asn-80. Asp-152 serves as a coordination point for Zn(2+). The Proton acceptor role is filled by Glu-186. Zn(2+) is bound at residue Glu-187.

It belongs to the peptidase M20A family. Zn(2+) serves as cofactor.

It is found in the secreted. The protein is Peptidase M20 domain-containing protein C757.05c of Schizosaccharomyces pombe (strain 972 / ATCC 24843) (Fission yeast).